The following is an 84-amino-acid chain: MIMAAGSTGERPFFEIITSIRYWIIHAVTLPAIFIAGFLFVYTGLAYDAFGTPRPDSYFQASESKAPVVTQRYDAKSQLDLRTK.

A helical transmembrane segment spans residues 24–38 (IIHAVTLPAIFIAGF). H26 contacts heme.

Belongs to the PsbE/PsbF family. As to quaternary structure, heterodimer of an alpha subunit and a beta subunit. PSII is composed of 1 copy each of membrane proteins PsbA, PsbB, PsbC, PsbD, PsbE, PsbF, PsbH, PsbI, PsbJ, PsbK, PsbL, PsbM, PsbT, PsbX, PsbY, Psb30/Ycf12, peripheral proteins PsbO, CyanoQ (PsbQ), PsbU, PsbV and a large number of cofactors. It forms dimeric complexes. The cofactor is heme b.

The protein localises to the cellular thylakoid membrane. Its function is as follows. This b-type cytochrome is tightly associated with the reaction center of photosystem II (PSII). PSII is a light-driven water:plastoquinone oxidoreductase that uses light energy to abstract electrons from H(2)O, generating O(2) and a proton gradient subsequently used for ATP formation. It consists of a core antenna complex that captures photons, and an electron transfer chain that converts photonic excitation into a charge separation. The chain is Cytochrome b559 subunit alpha from Prochlorococcus marinus subsp. pastoris (strain CCMP1986 / NIES-2087 / MED4).